Consider the following 259-residue polypeptide: Ribose-5-phosphate isomerase (259 aa).

Belongs to the ribose 5-phosphate isomerase family.

Its subcellular location is the cytoplasm. The enzyme catalyses aldehydo-D-ribose 5-phosphate = D-ribulose 5-phosphate. Its pathway is carbohydrate degradation; pentose phosphate pathway; D-ribose 5-phosphate from D-ribulose 5-phosphate (non-oxidative stage): step 1/1. In Vanderwaltozyma polyspora (strain ATCC 22028 / DSM 70294 / BCRC 21397 / CBS 2163 / NBRC 10782 / NRRL Y-8283 / UCD 57-17) (Kluyveromyces polysporus), this protein is Ribose-5-phosphate isomerase (RKI1).